Consider the following 567-residue polypeptide: PEX5-related protein (567 aa).

Residues Ser56–Ser105 are disordered. Ser146 is modified (phosphoserine). The tract at residues Leu150–Asn169 is disordered. A phosphoserine mark is found at Ser194, Ser198, and Ser202. TPR repeat units lie at residues Trp267–Asp300, Ala301–Asn334, and Lys336–Tyr368. Residues Ser386 and Ser388 each carry the phosphoserine modification. TPR repeat units follow at residues Pro415–Asp448, Ser450–Phe482, and Arg484–Ser516.

Belongs to the peroxisomal targeting signal receptor family. In terms of assembly, interacts with RAB8B. Forms an obligate 4:4 complex with HCN2. Interacts with HCN3. Interacts with HCN4 with a 4:4 HCN4:PEX5L stoichiometry; reduces the effects of cAMP on the voltage-dependence and rate of activation of HCN4.

It localises to the cytoplasm. Its subcellular location is the membrane. Functionally, accessory subunit of hyperpolarization-activated cyclic nucleotide-gated (HCN) channels, regulating their cell-surface expression and cyclic nucleotide dependence. The polypeptide is PEX5-related protein (Pex5l) (Mus musculus (Mouse)).